Here is a 252-residue protein sequence, read N- to C-terminus: Putative teichuronic acid biosynthesis glycosyltransferase TuaG (252 aa).

Belongs to the glycosyltransferase 2 family.

It participates in cell wall biogenesis; teichuronic acid biosynthesis. This Bacillus subtilis (strain 168) protein is Putative teichuronic acid biosynthesis glycosyltransferase TuaG (tuaG).